A 226-amino-acid polypeptide reads, in one-letter code: Brachyurin (226 aa).

The region spanning 1–223 is the Peptidase S1 domain; it reads IVGGVEAVPN…FLDWIQTQTG (223 aa). Cysteines 26 and 42 form a disulfide. Catalysis depends on charge relay system residues His-41 and Asp-87. 2 disulfides stabilise this stretch: Cys-151/Cys-164 and Cys-174/Cys-200. The active-site Charge relay system is Ser-178.

This sequence belongs to the peptidase S1 family.

It catalyses the reaction Hydrolysis of proteins, with broad specificity for peptide bonds. Native collagen is cleaved about 75% of the length of the molecule from the N-terminus. Low activity on small molecule substrates of both trypsin and chymotrypsin.. Its function is as follows. This enzyme is a serine protease capable of degrading the native triple helix of collagen. The polypeptide is Brachyurin (Leptuca pugilator (Atlantic sand fiddler crab)).